The primary structure comprises 40 residues: Natriuretic peptide PpNP-b (40 aa).

Positions 1 to 8 (SGSKTANI) are excised as a propeptide. Cys12 and Cys28 form a disulfide bridge. The interval 20-40 (IGTTSGMGCGRPRPKPTPGGS) is disordered.

The protein belongs to the natriuretic peptide family. Expressed by the venom gland.

The protein resides in the secreted. Functionally, snake venom natriuretic peptide that targets both NPR1 and NPR2. Exhibits hypotensive and vasodepressor activities. This is Natriuretic peptide PpNP-b from Pseudechis porphyriacus (Red-bellied black snake).